Consider the following 192-residue polypeptide: MAAWGRRRLGPGSGGGGARERVSLSATDCYIVHEIYNGENAQDQFEYELEQALEAQYKYIVIEPTRIGDETARWITVGNCLHKTTVLAGTACLFTPLALPLDYSHYISLPAGVLSLACCTLYGISWQFDPCCKYQVEYDAYRLSRLPLHTLTSSTPVVLVRKDDLHRKRLHNTIALAALVYCVKKIYELCAV.

The tract at residues Met1 to Glu20 is disordered. Transmembrane regions (helical) follow at residues Thr84–Pro100 and Ile107–Ile124.

This sequence belongs to the TMEM11 family. Associates with the mitochondrial contact site and cristae organizing system (MICOS) complex, composed of at least MICOS10/MIC10, CHCHD3/MIC19, CHCHD6/MIC25, APOOL/MIC27, IMMT/MIC60, APOO/MIC23/MIC26 and QIL1/MIC13. This complex was also known under the names MINOS or MitOS complex. The MICOS complex associates with mitochondrial outer membrane proteins SAMM50, MTX1, MTX2 and DNAJC11, mitochondrial inner membrane protein TMEM11 and with HSPA9. Interacts with IMMT/MIC60.

It is found in the mitochondrion inner membrane. In terms of biological role, plays a role in mitochondrial morphogenesis. The protein is Transmembrane protein 11, mitochondrial (TMEM11) of Bos taurus (Bovine).